The chain runs to 1455 residues: Nik-related protein kinase (1455 aa).

The Protein kinase domain occupies 25-313 (FSLDKAIGLG…SGNMLLHPFV (289 aa)). ATP contacts are provided by residues 31 to 39 (IGLGTYGRI) and Lys54. The active-site Proton acceptor is Asp177. Disordered regions lie at residues 385 to 404 (LHGEPPQPRWLPDQEDPQDQ) and 471 to 568 (TQDN…EDKE). A compositionally biased stretch (polar residues) spans 471-480 (TQDNKATSPE). The span at 494 to 505 (EALETEQPKDLD) shows a compositional bias: basic and acidic residues. Positions 520-531 (QPRQGQAAEQQQ) are enriched in low complexity. A compositionally biased stretch (acidic residues) spans 540–568 (PPEEDREPEQAEVQEEAVEPPQAEIEDKE). Residues 716–750 (RRRHRRWEDIFNQHEEQLRRVENDREDDSSDNDEV) are a coiled coil. Disordered regions lie at residues 760 to 854 (IEPH…PPYS) and 1029 to 1080 (AFGN…TETS). Ser847 and Ser850 each carry phosphoserine. Over residues 1029 to 1038 (AFGNHGANRG) the composition is skewed to low complexity. A compositionally biased stretch (basic and acidic residues) spans 1044 to 1078 (RNREANGRNEENGAFGRDQHVFPEFEHEESDRGTE). One can recognise a CNH domain in the interval 1138–1425 (SSEVYCGSLW…RFLCARGDKM (288 aa)).

It belongs to the protein kinase superfamily. STE Ser/Thr protein kinase family. STE20 subfamily.

The catalysed reaction is L-seryl-[protein] + ATP = O-phospho-L-seryl-[protein] + ADP + H(+). It catalyses the reaction L-threonyl-[protein] + ATP = O-phospho-L-threonyl-[protein] + ADP + H(+). May phosphorylate cofilin-1 and induce actin polymerization through this process, during the late stages of embryogenesis. Involved in the TNF-alpha-induced signaling pathway. This Mus musculus (Mouse) protein is Nik-related protein kinase (Nrk).